We begin with the raw amino-acid sequence, 103 residues long: Nucleoid-associated protein CFF8240_0066 (103 aa).

This sequence belongs to the YbaB/EbfC family. In terms of assembly, homodimer.

The protein resides in the cytoplasm. It is found in the nucleoid. Its function is as follows. Binds to DNA and alters its conformation. May be involved in regulation of gene expression, nucleoid organization and DNA protection. The chain is Nucleoid-associated protein CFF8240_0066 from Campylobacter fetus subsp. fetus (strain 82-40).